Consider the following 229-residue polypeptide: Urease accessory protein UreF (229 aa).

The protein belongs to the UreF family. As to quaternary structure, ureD, UreF and UreG form a complex that acts as a GTP-hydrolysis-dependent molecular chaperone, activating the urease apoprotein by helping to assemble the nickel containing metallocenter of UreC. The UreE protein probably delivers the nickel.

Its subcellular location is the cytoplasm. In terms of biological role, required for maturation of urease via the functional incorporation of the urease nickel metallocenter. The protein is Urease accessory protein UreF of Staphylococcus aureus (strain USA300).